Here is a 143-residue protein sequence, read N- to C-terminus: Putative glycerol transporter Lin0368 (143 aa).

Helical transmembrane passes span 6–26, 27–47, 60–80, and 90–110; these read GMIG…PLAE, NYGI…MWFM, AAFV…DVFM, and LPTI…AAAI. Positions 118 to 143 are disordered; sequence HEAKQEKTEPGMNIKEEERLNENQLV.

Its subcellular location is the membrane. Could be involved in the glycerol uptake either via facilitated diffusion or active transport. This chain is Putative glycerol transporter Lin0368, found in Listeria innocua serovar 6a (strain ATCC BAA-680 / CLIP 11262).